Here is a 259-residue protein sequence, read N- to C-terminus: Hydroxyethylthiazole kinase 1 (259 aa).

Met-38 serves as a coordination point for substrate. ATP contacts are provided by Arg-113 and Ser-158. Gly-185 lines the substrate pocket.

The protein belongs to the Thz kinase family. Requires Mg(2+) as cofactor.

The enzyme catalyses 5-(2-hydroxyethyl)-4-methylthiazole + ATP = 4-methyl-5-(2-phosphooxyethyl)-thiazole + ADP + H(+). The protein operates within cofactor biosynthesis; thiamine diphosphate biosynthesis; 4-methyl-5-(2-phosphoethyl)-thiazole from 5-(2-hydroxyethyl)-4-methylthiazole: step 1/1. Functionally, catalyzes the phosphorylation of the hydroxyl group of 4-methyl-5-beta-hydroxyethylthiazole (THZ). This is Hydroxyethylthiazole kinase 1 from Leuconostoc mesenteroides subsp. mesenteroides (strain ATCC 8293 / DSM 20343 / BCRC 11652 / CCM 1803 / JCM 6124 / NCDO 523 / NBRC 100496 / NCIMB 8023 / NCTC 12954 / NRRL B-1118 / 37Y).